A 445-amino-acid chain; its full sequence is C-terminal-binding protein 2 (445 aa).

Residue arginine 22 is modified to Asymmetric dimethylarginine. NAD(+)-binding positions include serine 106, isoleucine 186–threonine 191, aspartate 210, cysteine 243–asparagine 249, alanine 270–arginine 272, and aspartate 296. Residue arginine 272 is part of the active site. Glutamate 301 is an active-site residue. Histidine 321 serves as the catalytic Proton donor. Histidine 321 to tryptophan 324 provides a ligand contact to NAD(+). Positions threonine 414–glutamine 445 are disordered. Residue serine 428 is modified to Phosphoserine. A compositionally biased stretch (basic and acidic residues) spans lysine 434 to glutamine 445.

The protein belongs to the D-isomer specific 2-hydroxyacid dehydrogenase family. As to quaternary structure, interacts with the C-terminus of adenovirus E1A protein. Can form homodimers or heterodimers of CTBP1 and CTBP2. Interacts with HIPK2. Interacts with ZNF217, PNN, NRIP1 and WIZ. Interacts with PRDM16; represses white adipose tissue (WAT)-specific genes expression. Interacts with MCRIP1. As to expression, isoform 2 is specifically localized in synaptic ribbon (at protein level).

The protein localises to the nucleus. It is found in the synapse. Functionally, corepressor targeting diverse transcription regulators. Functions in brown adipose tissue (BAT) differentiation. Isoform 2 probably acts as a scaffold for specialized synapses. This is C-terminal-binding protein 2 (CTBP2) from Bos taurus (Bovine).